The chain runs to 142 residues: Tail assembly protein E' (142 aa).

The protein belongs to the mulikevirus tail assembly protein family.

Promotes tail assembly by creating a scaffold for the tail tube proteins. Tail assembly proteins E and E' would wrap the linear tape measure protein to create a tail assembly scaffold. The chain is Tail assembly protein E' from Enterobacteriaceae (Bacteriophage P2).